A 113-amino-acid polypeptide reads, in one-letter code: Ribonuclease P protein component (113 aa).

The span at 1-10 (MLPTRHRMRT) shows a compositional bias: basic residues. The disordered stretch occupies residues 1–23 (MLPTRHRMRTSAHFSTTVRSGAR).

Belongs to the RnpA family. As to quaternary structure, consists of a catalytic RNA component (M1 or rnpB) and a protein subunit.

The catalysed reaction is Endonucleolytic cleavage of RNA, removing 5'-extranucleotides from tRNA precursor.. Its function is as follows. RNaseP catalyzes the removal of the 5'-leader sequence from pre-tRNA to produce the mature 5'-terminus. It can also cleave other RNA substrates such as 4.5S RNA. The protein component plays an auxiliary but essential role in vivo by binding to the 5'-leader sequence and broadening the substrate specificity of the ribozyme. This is Ribonuclease P protein component from Kocuria rhizophila (strain ATCC 9341 / DSM 348 / NBRC 103217 / DC2201).